The chain runs to 285 residues: 4-hydroxybenzoate octaprenyltransferase (285 aa).

8 consecutive transmembrane segments (helical) span residues 28–48 (LWALWMAAGGPPALSVFCIFF), 86–106 (IAAWEAVLIAAVLALIAFALI), 110–130 (NSLTKWLAVVAAVVAGTYPFF), 133–153 (FFAIPQAYLGIAFGFGIPMAF), 160–180 (VPLVAWVMLLANVFWAVAYDT), 207–227 (VAAIMLCYAAFLVLMGWAGVM), 232–252 (WPYWVGLAAAAVCAGYHYTLI), and 262–284 (AAFRHNNWLGACVFAGTAVAYAI).

Belongs to the UbiA prenyltransferase family. Mg(2+) serves as cofactor.

It is found in the cell inner membrane. It carries out the reaction all-trans-octaprenyl diphosphate + 4-hydroxybenzoate = 4-hydroxy-3-(all-trans-octaprenyl)benzoate + diphosphate. It participates in cofactor biosynthesis; ubiquinone biosynthesis. In terms of biological role, catalyzes the prenylation of para-hydroxybenzoate (PHB) with an all-trans polyprenyl group. Mediates the second step in the final reaction sequence of ubiquinone-8 (UQ-8) biosynthesis, which is the condensation of the polyisoprenoid side chain with PHB, generating the first membrane-bound Q intermediate 3-octaprenyl-4-hydroxybenzoate. The sequence is that of 4-hydroxybenzoate octaprenyltransferase from Cupriavidus pinatubonensis (strain JMP 134 / LMG 1197) (Cupriavidus necator (strain JMP 134)).